Consider the following 96-residue polypeptide: UPF0235 protein Tola_0962 (96 aa).

Belongs to the UPF0235 family.

This chain is UPF0235 protein Tola_0962, found in Tolumonas auensis (strain DSM 9187 / NBRC 110442 / TA 4).